The following is a 1110-amino-acid chain: Nitric oxide synthase 3 (1110 aa).

The disordered stretch occupies residues 1–74 (MGNFKSVGQE…PPEGPKFPRV (74 aa)). Positions 15–27 (CGLGLGLGLGLCG) are enriched in gly residues. Over residues 31–40 (PASPAPVSAS) the composition is skewed to low complexity. Positions 47–69 (SSPPLPLPAPEHSPPLTRPPEGP) are enriched in pro residues. Cys97 and Cys102 together coordinate Zn(2+). The interaction with NOSIP stretch occupies residues 101 to 489 (RCLGSLVFPR…PDPWKGSGTK (389 aa)). Position 105 (Ser105) interacts with (6R)-L-erythro-5,6,7,8-tetrahydrobiopterin. At Ser117 the chain carries Phosphoserine. Cys187 contacts heme b. Gln250, Trp359, Tyr360, and Glu364 together coordinate L-arginine. (6R)-L-erythro-5,6,7,8-tetrahydrobiopterin is bound at residue Arg368. An L-arginine-binding site is contributed by Asn369. Positions 449, 450, and 463 each coordinate (6R)-L-erythro-5,6,7,8-tetrahydrobiopterin. Tyr478 provides a ligand contact to heme b. The residue at position 498 (Thr498) is a Phosphothreonine. FMN-binding residues include Ser529, Glu530, Thr531, Arg533, Ser575, and Thr576. A phosphoserine mark is found at Ser618, Ser636, and Ser641. Residues Ser657, Cys664, Glu690, and Gln694 each contribute to the FMN site. Arg779 serves as a coordination point for NADP(+). His801 lines the FAD pocket. The disordered stretch occupies residues 821-848 (EDPPPPAESVAVEQLEKGSPGGPPPGWV). Ser839 carries the post-translational modification Phosphoserine. FAD contacts are provided by Arg941, Tyr943, Ser944, Thr959, Ala961, Tyr965, Val978, Cys979, and Ser980. NADP(+) contacts are provided by Thr1019, Arg1052, Ser1081, Arg1082, and Lys1088.

The protein belongs to the NOS family. In terms of assembly, homodimer. Interacts with NOSIP and NOSTRIN. Interacts with HSP90AB1. Forms a complex with ASL, ASS1 and SLC7A1; the complex regulates cell-autonomous L-arginine synthesis and citrulline recycling while channeling extracellular L-arginine to nitric oxide synthesis pathway. Requires heme b as cofactor. FAD is required as a cofactor. It depends on FMN as a cofactor. The cofactor is (6R)-L-erythro-5,6,7,8-tetrahydrobiopterin.

The protein localises to the membrane. The protein resides in the caveola. Its subcellular location is the cytoplasm. It localises to the cytoskeleton. It is found in the golgi apparatus. The protein localises to the cell membrane. The catalysed reaction is 2 L-arginine + 3 NADPH + 4 O2 + H(+) = 2 L-citrulline + 2 nitric oxide + 3 NADP(+) + 4 H2O. With respect to regulation, stimulated by calcium/calmodulin. Inhibited by NOSIP and NOSTRIN. In terms of biological role, produces nitric oxide (NO) which is implicated in vascular smooth muscle relaxation through a cGMP-mediated signal transduction pathway. NO mediates vascular endothelial growth factor (VEGF)-induced angiogenesis in coronary vessels and promotes blood clotting through the activation of platelets. The sequence is that of Nitric oxide synthase 3 (NOS3) from Cavia porcellus (Guinea pig).